A 61-amino-acid polypeptide reads, in one-letter code: Photosystem II reaction center protein Z (61 aa).

2 consecutive transmembrane segments (helical) span residues 8-28 (ALLV…VLFS) and 41-61 (LVGS…SFFK).

The protein belongs to the PsbZ family. As to quaternary structure, PSII is composed of 1 copy each of membrane proteins PsbA, PsbB, PsbC, PsbD, PsbE, PsbF, PsbH, PsbI, PsbJ, PsbK, PsbL, PsbM, PsbT, PsbX, PsbY, PsbZ, Psb30/Ycf12, peripheral proteins PsbO, CyanoQ (PsbQ), PsbU, PsbV and a large number of cofactors. It forms dimeric complexes.

The protein resides in the cellular thylakoid membrane. May control the interaction of photosystem II (PSII) cores with the light-harvesting antenna, regulates electron flow through the 2 photosystem reaction centers. PSII is a light-driven water plastoquinone oxidoreductase, using light energy to abstract electrons from H(2)O, generating a proton gradient subsequently used for ATP formation. This chain is Photosystem II reaction center protein Z, found in Synechococcus sp. (strain JA-3-3Ab) (Cyanobacteria bacterium Yellowstone A-Prime).